The chain runs to 298 residues: ATP synthase gamma chain (298 aa).

Belongs to the ATPase gamma chain family. F-type ATPases have 2 components, CF(1) - the catalytic core - and CF(0) - the membrane proton channel. CF(1) has five subunits: alpha(3), beta(3), gamma(1), delta(1), epsilon(1). CF(0) has three main subunits: a, b and c.

It localises to the cell inner membrane. Functionally, produces ATP from ADP in the presence of a proton gradient across the membrane. The gamma chain is believed to be important in regulating ATPase activity and the flow of protons through the CF(0) complex. In Francisella philomiragia subsp. philomiragia (strain ATCC 25017 / CCUG 19701 / FSC 153 / O#319-036), this protein is ATP synthase gamma chain.